Reading from the N-terminus, the 206-residue chain is Synaptosomal-associated protein 25 (206 aa).

Basic and acidic residues predominate over residues M1–Q20. A disordered region spans residues M1–D23. The region spanning D19 to L81 is the t-SNARE coiled-coil homology 1 domain. Residues C85, C88, C90, and C92 are each lipidated (S-palmitoyl cysteine). At T138 the chain carries Phosphothreonine. Residues D140 to M202 form the t-SNARE coiled-coil homology 2 domain. At S187 the chain carries Phosphoserine.

Belongs to the SNAP-25 family. Part of the SNARE core complex containing SNAP25, VAMP2 and STX1A. This complex binds CPLX1. Interacts with TRIM9, RIMS1 and SNAPIN. Binds STXBP6. Found in a ternary complex with STX1A and VAMP8. Associates with the BLOC-1 complex. Isoform 1 and isoform 2 interact with BLOC1S6. Interacts with alpha-synuclein/SNCA. Post-translationally, palmitoylated. Cys-85 appears to be the main site, and palmitoylation is required for membrane association.

Its subcellular location is the membrane. It localises to the synapse. The protein resides in the synaptosome. The protein localises to the cell membrane. T-SNARE involved in the molecular regulation of neurotransmitter release. May play an important role in the synaptic function of specific neuronal systems. Associates with proteins involved in vesicle docking and membrane fusion. The chain is Synaptosomal-associated protein 25 (SNAP25) from Gallus gallus (Chicken).